The following is a 920-amino-acid chain: Phosphoenolpyruvate carboxylase (920 aa).

Residues histidine 138 and lysine 583 contribute to the active site.

This sequence belongs to the PEPCase type 1 family. Requires Mg(2+) as cofactor.

The enzyme catalyses oxaloacetate + phosphate = phosphoenolpyruvate + hydrogencarbonate. In terms of biological role, forms oxaloacetate, a four-carbon dicarboxylic acid source for the tricarboxylic acid cycle. This chain is Phosphoenolpyruvate carboxylase, found in Streptococcus pyogenes serotype M5 (strain Manfredo).